Here is a 272-residue protein sequence, read N- to C-terminus: HTH-type transcriptional repressor AllR (272 aa).

The disordered stretch occupies residues Met-1–Gly-20. The HTH iclR-type domain maps to Ala-21–Leu-83. The H-T-H motif DNA-binding region spans Val-43–Lys-62. The 170-residue stretch at Val-98–Leu-267 folds into the IclR-ED domain. Residues Ser-154–Ala-156, Asp-207, Cys-217, and Ser-234–Ser-236 each bind glyoxylate.

Functionally, negative regulator of allantoin and glyoxylate utilization operons. Binds to the gcl promoter and to the allS-allA intergenic region. The sequence is that of HTH-type transcriptional repressor AllR (allR) from Salmonella paratyphi A (strain ATCC 9150 / SARB42).